The chain runs to 341 residues: Tetraacyldisaccharide 4'-kinase (341 aa).

54–61 (TVGGTGKT) is a binding site for ATP.

This sequence belongs to the LpxK family.

It carries out the reaction a lipid A disaccharide + ATP = a lipid IVA + ADP + H(+). It participates in glycolipid biosynthesis; lipid IV(A) biosynthesis; lipid IV(A) from (3R)-3-hydroxytetradecanoyl-[acyl-carrier-protein] and UDP-N-acetyl-alpha-D-glucosamine: step 6/6. Transfers the gamma-phosphate of ATP to the 4'-position of a tetraacyldisaccharide 1-phosphate intermediate (termed DS-1-P) to form tetraacyldisaccharide 1,4'-bis-phosphate (lipid IVA). This chain is Tetraacyldisaccharide 4'-kinase, found in Mesorhizobium japonicum (strain LMG 29417 / CECT 9101 / MAFF 303099) (Mesorhizobium loti (strain MAFF 303099)).